A 481-amino-acid chain; its full sequence is 2-methylisoborneol synthase (481 aa).

2 disordered regions span residues 1–125 (MPDS…PVGP) and 139–160 (QAAVPPDAVPAPSGPSAEGPVV). Residues 11-23 (TSLPEQPPAPPAT) show a composition bias toward pro residues. Residues 24–33 (APDAPAATVT) are compositionally biased toward low complexity. 2 stretches are compositionally biased toward pro residues: residues 52–64 (VTRPSSPPSPSMP) and 71–104 (SSPPSSSMPPASWAPPSPLSPPAPSLPPTSPPAT). A compositionally biased stretch (low complexity) spans 105–114 (APETSAATGS). Residues Asp238, Asp239, Glu243, Asn386, Ser390, and Glu394 each coordinate Mg(2+).

Belongs to the terpene synthase family. 2-methylisoborneol synthase subfamily. Mg(2+) serves as cofactor.

The enzyme catalyses (E)-2-methylgeranyl diphosphate + H2O = 2-methylisoborneol + diphosphate. Catalyzes the cyclization of 2-methylgeranyl diphosphate (2-MeGPP) to 2-methylisoborneol (2-MIB), which likely involves the intermediacy of 2-methyllinalyl diphosphate. The polypeptide is 2-methylisoborneol synthase (tpc) (Streptomyces lasalocidi (Streptomyces lasaliensis)).